The following is a 550-amino-acid chain: Metal transporter Nramp3 (550 aa).

A compositionally biased stretch (polar residues) spans 1 to 26; it reads MSGPMQRSSQPQFISSVERNNQSNGP. The interval 1–30 is disordered; sequence MSGPMQRSSQPQFISSVERNNQSNGPGTPL. The next 12 membrane-spanning stretches (helical) occupy residues 50-70, 83-103, 127-147, 158-178, 185-205, 233-253, 276-296, 333-353, 368-390, 397-417, 435-455, and 473-493; these read LFSYIGPGFLVSIAYIDPGNF, ELLWIILIASCAALIIQSLAA, FILWILAELAVVACDIPEVIG, IPVWCGVLITGLSTLMLLLLQ, LEFLIAILVSLIATCFLVELG, ISLLGAMVMPHNLFLHSALVL, AFALTIAFLINISIISVSGAV, LFAVALLASGQSSTITGTYAG, WIRNLLTRSLAILPSLIVSIIGG, LIIIASMILSFELPFALVPLL, ISVITWGIGSFIVVINTYFLI, and VFSGIFGFLGMLIYMAAILYL. The segment at 523 to 550 is disordered; it reads GEGSLGHLPREDISSMQLPQQRTASDLD. A compositionally biased stretch (polar residues) spans 536–550; sequence SSMQLPQQRTASDLD.

Belongs to the NRAMP (TC 2.A.55) family.

Its subcellular location is the membrane. In terms of biological role, probable metal transporter. The chain is Metal transporter Nramp3 (NRAMP3) from Oryza sativa subsp. japonica (Rice).